The sequence spans 357 residues: Glucose-6-phosphatase catalytic subunit 1 (357 aa).

Topologically, residues 1-28 (MEKGMDVLHDFGIQSTHYLQVNYQDSQD) are lumenal. A helical membrane pass occupies residues 29–49 (WFILVSVIADLRNAFYVLFPI). Residues 50-60 (WFHLREAVGIK) lie on the Cytoplasmic side of the membrane. A helical membrane pass occupies residues 61–81 (LLWVAVIGDWLNLVFKWILFG). The Lumenal segment spans residues 82-117 (QRPYWWVMDTDYYSNTSVPLIKQFPVTCETGPGSPS). Arg83 lines the substrate pocket. Asn96 is a glycosylation site (N-linked (GlcNAc...) asparagine). The chain crosses the membrane as a helical span at residues 118 to 138 (GHAMGTAGVYYVMVTSTLSIF). Residue His119 is the Proton donor of the active site. At 139 to 147 (RGRKRPTYR) the chain is on the cytoplasmic side. The helical transmembrane segment at 148 to 168 (FRCLNILLWLGFWAVQLNVCL) threads the bilayer. Topologically, residues 169–170 (SR) are lumenal. Residue Arg170 coordinates substrate. A helical membrane pass occupies residues 171–191 (IYLAAHFPHQVVAGVLSGIAV). The active-site Nucleophile is His176. Residues 192 to 209 (AETFRHIQSIYNASLKKY) are Cytoplasmic-facing. A helical transmembrane segment spans residues 210 to 230 (FLITFFLFSFAIGFYLLLKGL). Residues 231 to 254 (GVDLLWTLEKARRWCERPEWVHID) are Lumenal-facing. The chain crosses the membrane as a helical span at residues 255–275 (TTPFASLLKNVGTLFGLGVTL). Over 276 to 291 (NSSMYRESCKGKLSKW) the chain is Cytoplasmic. Residues 292 to 312 (FPFRLSCIVVSLILLHLFDSL) traverse the membrane as a helical segment. Residues 313-320 (KPPSQTEL) are Lumenal-facing. A helical transmembrane segment spans residues 321–341 (IFYTLSFCKSAAVPLASVSLI). Residues 342-357 (PYCLARVFDQPDKKSL) lie on the Cytoplasmic side of the membrane. The Prevents secretion from ER motif lies at 354–357 (KKSL).

It belongs to the glucose-6-phosphatase family.

It localises to the endoplasmic reticulum membrane. It catalyses the reaction D-glucose 6-phosphate + H2O = D-glucose + phosphate. The protein operates within carbohydrate biosynthesis; gluconeogenesis. Its function is as follows. Hydrolyzes glucose-6-phosphate to glucose in the endoplasmic reticulum. Forms with the glucose-6-phosphate transporter (SLC37A4/G6PT) the complex responsible for glucose production in the terminal step of glycogenolysis and gluconeogenesis. Hence, it is the key enzyme in homeostatic regulation of blood glucose levels. In Canis lupus familiaris (Dog), this protein is Glucose-6-phosphatase catalytic subunit 1 (G6PC1).